We begin with the raw amino-acid sequence, 320 residues long: Ribosomal protein L11 methyltransferase (320 aa).

4 residues coordinate S-adenosyl-L-methionine: Thr-165, Gly-186, Asp-208, and Asn-251.

Belongs to the methyltransferase superfamily. PrmA family.

The protein localises to the cytoplasm. The catalysed reaction is L-lysyl-[protein] + 3 S-adenosyl-L-methionine = N(6),N(6),N(6)-trimethyl-L-lysyl-[protein] + 3 S-adenosyl-L-homocysteine + 3 H(+). Methylates ribosomal protein L11. In Limosilactobacillus fermentum (strain NBRC 3956 / LMG 18251) (Lactobacillus fermentum), this protein is Ribosomal protein L11 methyltransferase.